Reading from the N-terminus, the 730-residue chain is Multifunctional procollagen lysine hydroxylase and glycosyltransferase (730 aa).

A signal peptide spans 1 to 16 (MRVLPFLLPLIPVLLA). Positions 20-280 (TDLPELVVVT…CGLEVKESEE (261 aa)) are required for glycosyltransferase activity. UDP contacts are provided by residues 30–32 (VAT) and 98–100 (DAY). Positions 98, 101, and 242 each coordinate Mn(2+). Residue 245 to 248 (GPSK) coordinates UDP. Cys-268 and Cys-271 are joined by a disulfide. The interval 281–507 (VPLIALNLFI…YYGFLIVSDE (227 aa)) is accessory region. Cys-554 and Cys-690 are disulfide-bonded. 2-oxoglutarate-binding residues include Arg-590 and Tyr-648. In terms of domain architecture, Fe2OG dioxygenase spans 639 to 730 (ESNMMFVVRY…RYIMVSFINP (92 aa)). Fe cation contacts are provided by His-659 and Asp-661. The interval 664-707 (TFSIDIALNKKGRDYEGGGVRYIRYNCTVPADEVGYAMMFPGRL) is important for dimerization. Residue Asn-689 is glycosylated (N-linked (GlcNAc...) asparagine). Residue His-711 participates in Fe cation binding. Arg-721 contacts 2-oxoglutarate.

As to quaternary structure, homodimer. It depends on Fe(2+) as a cofactor. L-ascorbate is required as a cofactor. Requires Mn(2+) as cofactor.

It localises to the rough endoplasmic reticulum. It is found in the endoplasmic reticulum lumen. The protein resides in the endoplasmic reticulum membrane. Its subcellular location is the secreted. The protein localises to the extracellular space. It catalyses the reaction L-lysyl-[collagen] + 2-oxoglutarate + O2 = (5R)-5-hydroxy-L-lysyl-[collagen] + succinate + CO2. It carries out the reaction (5R)-5-hydroxy-L-lysyl-[collagen] + UDP-alpha-D-galactose = (5R)-5-O-(beta-D-galactosyl)-5-hydroxy-L-lysyl-[collagen] + UDP + H(+). The enzyme catalyses (5R)-5-O-(beta-D-galactosyl)-5-hydroxy-L-lysyl-[collagen] + UDP-alpha-D-glucose = (5R)-5-O-[alpha-D-glucosyl-(1-&gt;2)-beta-D-galactosyl]-5-hydroxy-L-lysyl-[collagen] + UDP + H(+). In terms of biological role, multifunctional enzyme that catalyzes a series of post-translational modifications on Lys residues in procollagen. Catalyzes the formation of hydroxylysine residues in -Xaa-Lys-Gly- sequences in type IV collagens. Transfers galactose onto hydroxylysine groups, giving rise to galactosyl 5-hydroxylysine. Catalyzes the subsequent transfer of glucose moieties, giving rise to 1,2-glucosylgalactosyl-5-hydroxylysine residues. Essential for normal biosynthesis and secretion of type IV collagens. Essential for normal stability of the basement membrane. In Caenorhabditis elegans, this protein is Multifunctional procollagen lysine hydroxylase and glycosyltransferase (let-268).